Here is an 809-residue protein sequence, read N- to C-terminus: Protein TRC8 homolog (809 aa).

11 consecutive transmembrane segments (helical) span residues 124 to 144 (TVKFVLCVFAFLSAACIFMLW), 147 to 167 (HLVMVYMFLTSLGLTFLSYWS), 200 to 220 (VMSLAPHLMAQWFMGMLFAYI), 233 to 253 (MPIIFASPILLAMLPLPAKVV), 256 to 276 (LPVVAVFTPIILTKITLMQSA), 350 to 370 (LVDGCETMTAVLGMTGVISMF), 392 to 412 (LGTVSAVLFYILALQTGLTSL), 425 to 445 (LCLLMTALLHFLHNIVSPILM), 461 to 481 (ALSVCAFLVVLSVSLLYHLWS), 488 to 508 (WLLAVTAFSVEVVVKVLVSLA), and 539 to 559 (SVEFCFGILLFINGAWILIFE). The RING-type; atypical zinc-finger motif lies at 621–659 (CAICYQEMYSAKITRCRHFFHGVCLRKWLYVQDRCPLCH). Disordered regions lie at residues 696 to 724 (NNAAAQRRSPERAPVEASEQAPATSSSSA) and 752 to 788 (VASSSSATHRISASGSSDSSYMTASAQSPPPTATSAA). Residues 711–724 (EASEQAPATSSSSA) show a composition bias toward low complexity.

As to quaternary structure, interacts with VHL. Interacts with the MPN domain of CSN5. Interacts with EIF3F and EIF3H.

The protein resides in the endoplasmic reticulum membrane. In terms of biological role, plays a role in growth inhibition that is dependent upon COP9 signalosome subunits CSN5 and CSN6. May modulate signalosome levels or compartmentalization. Probably functions in the same or a related pathway to VHL during early midline development. The protein is Protein TRC8 homolog of Drosophila melanogaster (Fruit fly).